We begin with the raw amino-acid sequence, 89 residues long: Endoribonuclease VapD 1 (89 aa).

This sequence belongs to the VapD ribonuclease family. Homodimer.

In terms of biological role, cleaves ssRNA, mostly between U:A. In Riemerella anatipestifer (Moraxella anatipestifer), this protein is Endoribonuclease VapD 1.